We begin with the raw amino-acid sequence, 299 residues long: Epimerase family protein SH2119 (299 aa).

This sequence belongs to the NAD(P)-dependent epimerase/dehydratase family. SDR39U1 subfamily.

This Staphylococcus haemolyticus (strain JCSC1435) protein is Epimerase family protein SH2119.